A 192-amino-acid polypeptide reads, in one-letter code: Crossover junction endodeoxyribonuclease RuvC (192 aa).

Catalysis depends on residues Asp-7, Glu-67, and Asp-140. Positions 7, 67, and 140 each coordinate Mg(2+). A disordered region spans residues 158–192 (RQSGVPPRTNSRRKSGTGGSWEQFVRQSPNVVVRS). Polar residues predominate over residues 182 to 192 (VRQSPNVVVRS).

It belongs to the RuvC family. Homodimer which binds Holliday junction (HJ) DNA. The HJ becomes 2-fold symmetrical on binding to RuvC with unstacked arms; it has a different conformation from HJ DNA in complex with RuvA. In the full resolvosome a probable DNA-RuvA(4)-RuvB(12)-RuvC(2) complex forms which resolves the HJ. Mg(2+) serves as cofactor.

It localises to the cytoplasm. The enzyme catalyses Endonucleolytic cleavage at a junction such as a reciprocal single-stranded crossover between two homologous DNA duplexes (Holliday junction).. In terms of biological role, the RuvA-RuvB-RuvC complex processes Holliday junction (HJ) DNA during genetic recombination and DNA repair. Endonuclease that resolves HJ intermediates. Cleaves cruciform DNA by making single-stranded nicks across the HJ at symmetrical positions within the homologous arms, yielding a 5'-phosphate and a 3'-hydroxyl group; requires a central core of homology in the junction. The consensus cleavage sequence is 5'-(A/T)TT(C/G)-3'. Cleavage occurs on the 3'-side of the TT dinucleotide at the point of strand exchange. HJ branch migration catalyzed by RuvA-RuvB allows RuvC to scan DNA until it finds its consensus sequence, where it cleaves and resolves the cruciform DNA. The polypeptide is Crossover junction endodeoxyribonuclease RuvC (Chlorobium chlorochromatii (strain CaD3)).